A 901-amino-acid polypeptide reads, in one-letter code: Protein translocase subunit SecA (901 aa).

ATP is bound by residues glutamine 87, 105–109 (GEGKT), and aspartate 512. Residues 859–901 (HQDDDSAAAAALAAQTGERKVGRNDPCPCGSGKKYKQCHGRLQ) form a disordered region. Residues cysteine 885, cysteine 887, cysteine 896, and histidine 897 each contribute to the Zn(2+) site. Basic residues predominate over residues 891-901 (KKYKQCHGRLQ).

Belongs to the SecA family. Monomer and homodimer. Part of the essential Sec protein translocation apparatus which comprises SecA, SecYEG and auxiliary proteins SecDF-YajC and YidC. Zn(2+) serves as cofactor.

It localises to the cell inner membrane. The protein resides in the cytoplasm. The catalysed reaction is ATP + H2O + cellular proteinSide 1 = ADP + phosphate + cellular proteinSide 2.. Its function is as follows. Part of the Sec protein translocase complex. Interacts with the SecYEG preprotein conducting channel. Has a central role in coupling the hydrolysis of ATP to the transfer of proteins into and across the cell membrane, serving both as a receptor for the preprotein-SecB complex and as an ATP-driven molecular motor driving the stepwise translocation of polypeptide chains across the membrane. The protein is Protein translocase subunit SecA of Escherichia coli (strain 55989 / EAEC).